We begin with the raw amino-acid sequence, 212 residues long: Thymidylate kinase (212 aa).

11-18 (GPDGAGKT) is an ATP binding site.

The protein belongs to the thymidylate kinase family.

The catalysed reaction is dTMP + ATP = dTDP + ADP. Functionally, phosphorylation of dTMP to form dTDP in both de novo and salvage pathways of dTTP synthesis. This is Thymidylate kinase from Streptococcus mutans serotype c (strain ATCC 700610 / UA159).